We begin with the raw amino-acid sequence, 368 residues long: Alanine racemase (368 aa).

Lys-40 acts as the Proton acceptor; specific for D-alanine in catalysis. Lys-40 carries the post-translational modification N6-(pyridoxal phosphate)lysine. Arg-134 is a substrate binding site. The active-site Proton acceptor; specific for L-alanine is the Tyr-263. Residue Met-310 coordinates substrate.

This sequence belongs to the alanine racemase family. Pyridoxal 5'-phosphate is required as a cofactor.

The enzyme catalyses L-alanine = D-alanine. It participates in amino-acid biosynthesis; D-alanine biosynthesis; D-alanine from L-alanine: step 1/1. Its function is as follows. Catalyzes the interconversion of L-alanine and D-alanine. May also act on other amino acids. This Listeria innocua serovar 6a (strain ATCC BAA-680 / CLIP 11262) protein is Alanine racemase (alr).